The sequence spans 459 residues: tRNA modification GTPase MnmE (459 aa).

(6S)-5-formyl-5,6,7,8-tetrahydrofolate contacts are provided by arginine 20, glutamate 85, and arginine 124. In terms of domain architecture, TrmE-type G spans 221 to 380 (GLSTVIIGRP…LEEAIQSLFY (160 aa)). Residue asparagine 231 coordinates K(+). GTP contacts are provided by residues 231-236 (NVGKSS), 250-256 (TDIPGTT), and 275-278 (DTAG). Serine 235 contributes to the Mg(2+) binding site. 3 residues coordinate K(+): threonine 250, isoleucine 252, and threonine 255. Residue threonine 256 coordinates Mg(2+). Lysine 459 provides a ligand contact to (6S)-5-formyl-5,6,7,8-tetrahydrofolate.

This sequence belongs to the TRAFAC class TrmE-Era-EngA-EngB-Septin-like GTPase superfamily. TrmE GTPase family. Homodimer. Heterotetramer of two MnmE and two MnmG subunits. It depends on K(+) as a cofactor.

The protein resides in the cytoplasm. Its function is as follows. Exhibits a very high intrinsic GTPase hydrolysis rate. Involved in the addition of a carboxymethylaminomethyl (cmnm) group at the wobble position (U34) of certain tRNAs, forming tRNA-cmnm(5)s(2)U34. The polypeptide is tRNA modification GTPase MnmE (Bacillus subtilis (strain 168)).